The sequence spans 1117 residues: DNA-directed RNA polymerase subunit beta (1117 aa).

A disordered region spans residues glutamine 1094–glutamate 1117. Residues leucine 1108 to glutamate 1117 show a composition bias toward basic and acidic residues.

This sequence belongs to the RNA polymerase beta chain family. In terms of assembly, in cyanobacteria the RNAP catalytic core is composed of 2 alpha, 1 beta, 1 beta', 1 gamma and 1 omega subunit. When a sigma factor is associated with the core the holoenzyme is formed, which can initiate transcription.

The catalysed reaction is RNA(n) + a ribonucleoside 5'-triphosphate = RNA(n+1) + diphosphate. DNA-dependent RNA polymerase catalyzes the transcription of DNA into RNA using the four ribonucleoside triphosphates as substrates. This is DNA-directed RNA polymerase subunit beta from Trichormus variabilis (strain ATCC 29413 / PCC 7937) (Anabaena variabilis).